A 1125-amino-acid chain; its full sequence is Kinase and exchange factor for Rac B (1125 aa).

Disordered stretches follow at residues 50–175 (VTGG…ASIN), 247–287 (SVPG…GGKF), and 322–362 (KTRD…VNSD). The span at 59–91 (NNQQQQQNNNNNNNNNNNNNNNNNNNNNNNNNN) shows a compositional bias: low complexity. Polar residues predominate over residues 92–106 (SGEISSNNSTPSILF). Positions 113–124 (TAPPAPPQPTTP) are enriched in pro residues. The span at 137 to 161 (NINQQPIGGVNNNNNNNNKDSPSNK) shows a compositional bias: low complexity. The DH domain occupies 380-571 (KRRQVSLQIL…KSTVDYVKEK (192 aa)). A PH domain is found at 601–822 (RYVREGMLTE…WIQAIHANII (222 aa)). Disordered regions lie at residues 693-729 (INNMTNNDSKSKNNNNNNSNGNNNNNNINSNSNSNNN) and 761-791 (SNNNNNNNINSNNNINGNNNNGNNSVNYSNG). Residues 694–729 (NNMTNNDSKSKNNNNNNSNGNNNNNNINSNSNSNNN) are compositionally biased toward low complexity. A Protein kinase domain is found at 848-1117 (IKLCEQIGSG…QLVQKLTKML (270 aa)). Residues 854–862 (IGSGGSGCT) and lysine 876 contribute to the ATP site. The active-site Proton acceptor is aspartate 971.

The protein belongs to the protein kinase superfamily. STE Ser/Thr protein kinase family. The cofactor is Mg(2+).

The catalysed reaction is L-seryl-[protein] + ATP = O-phospho-L-seryl-[protein] + ADP + H(+). It carries out the reaction L-threonyl-[protein] + ATP = O-phospho-L-threonyl-[protein] + ADP + H(+). The polypeptide is Kinase and exchange factor for Rac B (Dictyostelium discoideum (Social amoeba)).